The following is a 367-amino-acid chain: Phospho-N-acetylmuramoyl-pentapeptide-transferase (367 aa).

10 helical membrane passes run 34-54 (GAVV…IDHL), 78-98 (TPTM…VLWA), 101-121 (LNPY…VGFY), 135-155 (FGSK…CYAL), 175-195 (TVLH…VGAG), 206-226 (GLAI…AYLA), 246-266 (LAVL…FNAP), 270-290 (IFMG…IAVA), 295-315 (IVLA…IVQV), and 344-364 (QIVI…LSTL).

Belongs to the glycosyltransferase 4 family. MraY subfamily. It depends on Mg(2+) as a cofactor.

It is found in the cell inner membrane. It carries out the reaction UDP-N-acetyl-alpha-D-muramoyl-L-alanyl-gamma-D-glutamyl-meso-2,6-diaminopimeloyl-D-alanyl-D-alanine + di-trans,octa-cis-undecaprenyl phosphate = di-trans,octa-cis-undecaprenyl diphospho-N-acetyl-alpha-D-muramoyl-L-alanyl-D-glutamyl-meso-2,6-diaminopimeloyl-D-alanyl-D-alanine + UMP. It functions in the pathway cell wall biogenesis; peptidoglycan biosynthesis. Catalyzes the initial step of the lipid cycle reactions in the biosynthesis of the cell wall peptidoglycan: transfers peptidoglycan precursor phospho-MurNAc-pentapeptide from UDP-MurNAc-pentapeptide onto the lipid carrier undecaprenyl phosphate, yielding undecaprenyl-pyrophosphoryl-MurNAc-pentapeptide, known as lipid I. This is Phospho-N-acetylmuramoyl-pentapeptide-transferase from Bradyrhizobium diazoefficiens (strain JCM 10833 / BCRC 13528 / IAM 13628 / NBRC 14792 / USDA 110).